The primary structure comprises 118 residues: Basic phospholipase A2 nigexine (118 aa).

Cystine bridges form between C11–C70, C26–C117, C28–C44, C43–C98, C50–C91, C59–C84, and C77–C89. 3 residues coordinate Ca(2+): Y27, G29, and G31. The active site involves H47. A Ca(2+)-binding site is contributed by D48. The Coagulation factor Xa binding motif motif lies at 52-69; that stretch reads EKAGKMGCWPYFTLYKYK. D92 is an active-site residue.

Belongs to the phospholipase A2 family. Group I subfamily. D49 sub-subfamily. Requires Ca(2+) as cofactor. In terms of tissue distribution, expressed by the venom gland.

The protein localises to the secreted. It carries out the reaction a 1,2-diacyl-sn-glycero-3-phosphocholine + H2O = a 1-acyl-sn-glycero-3-phosphocholine + a fatty acid + H(+). Snake venom phospholipase A2 (PLA2) that shows anticoagulant activity, has cytotoxic activity and affects neuromuscular transmission in vitro. PLA2 catalyzes the calcium-dependent hydrolysis of the 2-acyl groups in 3-sn-phosphoglycerides. The sequence is that of Basic phospholipase A2 nigexine from Naja pallida (Red spitting cobra).